The primary structure comprises 562 residues: MSGTILENLSGRKLSILVASLLLCQVFCFLLGGLYAPLPAGHVTVLGSLCREDHTRQNDTSFLLYSRGAGACIPVSREEVERDPMKMANELVHVFQMPLPRDLRDLDYSRWQQNLIGVLQVEFGYDSTSELREPPKELQLTIDMRLAYRNKGDPDQAWKLYAHGVEQRYLDCVTAHVGPTETLYSCDMIPLFELGALHHSFYLLNLRFPLDTPRQMNLQFGHMHDLTLTAIHQNGGFTQIWLMLKTVLFPFVVGIMIWFWRRVHLLQRSPALLEYMLIYLGGALTFLNLPLEYLSLVVEMPYMLLLSDIRQGIFYAMLLSFWLVFAGEHMLIQDAPNKSTIRSRYWKHLSAVVVGCISLFVFDICERGVQLRNPFYSIWTTPLGAKVAMTFIILAGVSAAIYFLFLCYMIWKVFRNIGDKRTSLPSMSQARRLHYEGLIYRFKFLMLATLLCAALTVAGFIMGQMAEGQWQWNDNVEIQLTSAFLTGVYGMWNIYIFALLILYAPSHKQWPTMHHSDETTQSNENIVASAASEEIEFSHLPSDSNPSEISSLTSFTRKVAFD.

The Cytoplasmic segment spans residues 1-13; the sequence is MSGTILENLSGRK. The chain crosses the membrane as a helical span at residues 14 to 34; the sequence is LSILVASLLLCQVFCFLLGGL. At 35–239 the chain is on the lumenal side; that stretch reads YAPLPAGHVT…AIHQNGGFTQ (205 aa). Asn58 carries N-linked (GlcNAc...) asparagine glycosylation. Residues 240 to 260 form a helical membrane-spanning segment; the sequence is IWLMLKTVLFPFVVGIMIWFW. The Cytoplasmic portion of the chain corresponds to 261 to 270; sequence RRVHLLQRSP. Residues 271–291 form a helical membrane-spanning segment; sequence ALLEYMLIYLGGALTFLNLPL. Residues 292-311 are Lumenal-facing; it reads EYLSLVVEMPYMLLLSDIRQ. The helical transmembrane segment at 312–332 threads the bilayer; it reads GIFYAMLLSFWLVFAGEHMLI. At 333-344 the chain is on the cytoplasmic side; sequence QDAPNKSTIRSR. Residues 345 to 365 form a helical membrane-spanning segment; that stretch reads YWKHLSAVVVGCISLFVFDIC. Topologically, residues 366–390 are lumenal; that stretch reads ERGVQLRNPFYSIWTTPLGAKVAMT. The helical transmembrane segment at 391 to 411 threads the bilayer; sequence FIILAGVSAAIYFLFLCYMIW. The Cytoplasmic segment spans residues 412–441; it reads KVFRNIGDKRTSLPSMSQARRLHYEGLIYR. Residues 442 to 462 form a helical membrane-spanning segment; sequence FKFLMLATLLCAALTVAGFIM. Topologically, residues 463-482 are lumenal; it reads GQMAEGQWQWNDNVEIQLTS. Residues 483–503 traverse the membrane as a helical segment; the sequence is AFLTGVYGMWNIYIFALLILY. Topologically, residues 504–562 are cytoplasmic; it reads APSHKQWPTMHHSDETTQSNENIVASAASEEIEFSHLPSDSNPSEISSLTSFTRKVAFD. Residues 539-562 are disordered; sequence HLPSDSNPSEISSLTSFTRKVAFD. Residues 541 to 556 show a composition bias toward polar residues; it reads PSDSNPSEISSLTSFT.

This sequence belongs to the wntless family. As to quaternary structure, interacts with wg; in the Golgi. Interacts with Vps35, a component of the retromer complex; wls stability is regulated by Vps35.

It is found in the presynaptic cell membrane. The protein localises to the postsynaptic cell membrane. Its subcellular location is the cell membrane. The protein resides in the endoplasmic reticulum membrane. It localises to the endosome membrane. It is found in the golgi apparatus membrane. In terms of biological role, a segment polarity gene required for wingless (wg)-dependent patterning processes, acting in both wg-sending cells and wg-target cells. In non-neuronal cells wls directs wg secretion. The wls traffic loop encompasses the Golgi, the cell surface, an endocytic compartment and a retrograde route leading back to the Golgi, and involves clathrin-mediated endocytosis and the retromer complex (a conserved protein complex consisting of Vps35 and Vps26). In neuronal cells (the larval motorneuron NMJ), the wg signal moves across the synapse via the release of wls-containing exosome-like vesicles. Postsynaptic wls is required for the trafficking of fz2 through the fz2-interacting protein Grip. The protein is Protein wntless of Drosophila ananassae (Fruit fly).